A 134-amino-acid polypeptide reads, in one-letter code: Small ribosomal subunit protein uS8c (134 aa).

This sequence belongs to the universal ribosomal protein uS8 family. As to quaternary structure, part of the 30S ribosomal subunit.

It localises to the plastid. Functionally, one of the primary rRNA binding proteins, it binds directly to 16S rRNA central domain where it helps coordinate assembly of the platform of the 30S subunit. This Cuscuta reflexa (Southern Asian dodder) protein is Small ribosomal subunit protein uS8c (rps8).